A 137-amino-acid polypeptide reads, in one-letter code: 6,7-dimethyl-8-ribityllumazine synthase (137 aa).

Residues phenylalanine 11, 43–45 (SFD), and 67–69 (CVI) contribute to the 5-amino-6-(D-ribitylamino)uracil site. 72 to 73 (DT) lines the (2S)-2-hydroxy-3-oxobutyl phosphate pocket. The active-site Proton donor is histidine 75. Leucine 100 is a binding site for 5-amino-6-(D-ribitylamino)uracil. Residue arginine 115 coordinates (2S)-2-hydroxy-3-oxobutyl phosphate.

The protein belongs to the DMRL synthase family. As to quaternary structure, forms an icosahedral capsid composed of 60 subunits, arranged as a dodecamer of pentamers.

The catalysed reaction is (2S)-2-hydroxy-3-oxobutyl phosphate + 5-amino-6-(D-ribitylamino)uracil = 6,7-dimethyl-8-(1-D-ribityl)lumazine + phosphate + 2 H2O + H(+). The protein operates within cofactor biosynthesis; riboflavin biosynthesis; riboflavin from 2-hydroxy-3-oxobutyl phosphate and 5-amino-6-(D-ribitylamino)uracil: step 1/2. Functionally, catalyzes the formation of 6,7-dimethyl-8-ribityllumazine by condensation of 5-amino-6-(D-ribitylamino)uracil with 3,4-dihydroxy-2-butanone 4-phosphate. This is the penultimate step in the biosynthesis of riboflavin. The sequence is that of 6,7-dimethyl-8-ribityllumazine synthase from Methanococcus maripaludis (strain C5 / ATCC BAA-1333).